A 497-amino-acid chain; its full sequence is Homeotic protein empty spiracles (497 aa).

Disordered stretches follow at residues 34-117, 161-262, and 441-497; these read NDVS…HLSP, SPLQ…MMMP, and NRRT…DASH. A compositionally biased stretch (polar residues) spans 35–50; it reads DVSTAGGNSTPDLSGP. Residues 51-68 show a composition bias toward pro residues; sequence QSPPPGERNVPGSPPQTP. A compositionally biased stretch (low complexity) spans 96–117; sequence PHAQQQQQQHLQAPHPHPHLSP. The span at 161-176 shows a compositional bias: polar residues; that stretch reads SPLQTRLSPETEQPQM. Composition is skewed to low complexity over residues 208–239 and 248–262; these read PKSV…QQQQ and PAMM…MMMP. The segment at residues 391–450 is a DNA-binding region (homeobox); it reads PKRIRTAFSPSQLLKLEHAFESNQYVVGAERKALAQNLNLSETQVKVWFQNRRTKHKRMQ. Residues 470 to 497 are compositionally biased toward acidic residues; that stretch reads GDEDDDELIDMEMDECPSDEEHELDASH.

It belongs to the EMX homeobox family.

The protein localises to the nucleus. In terms of biological role, acts as a homeotic selector gene controlling antennal and mandibular segment identity. The polypeptide is Homeotic protein empty spiracles (ems) (Drosophila melanogaster (Fruit fly)).